The sequence spans 159 residues: Nucleoside diphosphate kinase (159 aa).

ATP is bound by residues K13, F61, R89, T95, R106, and N116. The Pros-phosphohistidine intermediate role is filled by H119.

Belongs to the NDK family. The cofactor is Mg(2+).

It localises to the cytoplasm. It carries out the reaction a 2'-deoxyribonucleoside 5'-diphosphate + ATP = a 2'-deoxyribonucleoside 5'-triphosphate + ADP. The catalysed reaction is a ribonucleoside 5'-diphosphate + ATP = a ribonucleoside 5'-triphosphate + ADP. Functionally, major role in the synthesis of nucleoside triphosphates other than ATP. The ATP gamma phosphate is transferred to the NDP beta phosphate via a ping-pong mechanism, using a phosphorylated active-site intermediate. The polypeptide is Nucleoside diphosphate kinase (Halorubrum lacusprofundi (strain ATCC 49239 / DSM 5036 / JCM 8891 / ACAM 34)).